The sequence spans 125 residues: UPF0102 protein CCNA_00142 (125 aa).

This sequence belongs to the UPF0102 family.

This chain is UPF0102 protein CCNA_00142, found in Caulobacter vibrioides (strain NA1000 / CB15N) (Caulobacter crescentus).